Here is a 417-residue protein sequence, read N- to C-terminus: MDVERLQEALKDFEKRGKKEVCPVLDQFLCHVAKTGETMIQWSQFKGYFIFKLEKVMDDFRTSAPEPRGPPNPNVEYIPFDEMKERILKIVTGFNGIPFTIQRLCELLTDPRRNYTGTDKFLRGVEKNVMVVSCVCPSSEKNNSNSLNRMNGVMFPGNSPNYTDRSNINGPGTPRPLNRPKLSLSAPLTTNGLPESTDSKDSELQLSEEKGHSDSSASESEVSLLSPVKNKHPDEDAVESEEHEVKRLKFDKEGDVRETASQTVSGEVSSVRAEETETAAPPPDKDRESRTRQHCTEEEEEEEEEEEEEEEESFMTPREMVPERKNQEKESDDALTVNEETSEESHQMEGSGVSPAQTDSTSERSDSAGASRSGSDCLETQESGGPPSSKTGESVSVPSSMESEEATEVTDDPMEQD.

The segment at 141–417 is disordered; that stretch reads KNNSNSLNRM…EVTDDPMEQD (277 aa). Composition is skewed to polar residues over residues 158 to 170 and 186 to 196; these read NSPN…NING and APLTTNGLPES. At Ser-159 the chain carries Phosphoserine. The segment covering 197–213 has biased composition (basic and acidic residues); the sequence is TDSKDSELQLSEEKGHS. Low complexity predominate over residues 214–226; it reads DSSASESEVSLLS. Ser-226 is subject to Phosphoserine. The span at 243 to 258 shows a compositional bias: basic and acidic residues; sequence HEVKRLKFDKEGDVRE. Residues 259-268 are compositionally biased toward polar residues; that stretch reads TASQTVSGEV. Residues 283-296 show a composition bias toward basic and acidic residues; sequence PDKDRESRTRQHCT. A compositionally biased stretch (acidic residues) spans 297–313; that stretch reads EEEEEEEEEEEEEEEES. Residues 320-329 show a composition bias toward basic and acidic residues; that stretch reads MVPERKNQEK. A compositionally biased stretch (low complexity) spans 367–376; sequence SAGASRSGSD. Residues 378-392 are compositionally biased toward polar residues; sequence LETQESGGPPSSKTG. Residues 402–417 show a composition bias toward acidic residues; the sequence is ESEEATEVTDDPMEQD.

It belongs to the PPP4R2 family. Serine/threonine-protein phosphatase 4 (PP4) occurs in different assemblies of the catalytic and one or more regulatory subunits. Component of the PP4 complexes PPP4C-PPP4R2, PPP4C-PPP4R2-PPP4R3A and PPP4C-PPP4R2-PPP4R3B. The PPP4C-PPP4R2 complex appears to be a tetramer composed of 2 molecules of PPP4C and 2 molecules of PPP4R2. Interacts with DDX20/GEMIN3 and GEMIN4. Interacts with RPA2; this DNA damage-dependent interaction recruits PPP4C leading to RPA2 dephosphorylation.

The protein localises to the cytoplasm. It is found in the cytoskeleton. The protein resides in the microtubule organizing center. It localises to the centrosome. Its subcellular location is the nucleus. Its function is as follows. Regulatory subunit of serine/threonine-protein phosphatase 4 (PP4). May regulate the activity of PPP4C at centrosomal microtubule organizing centers. Its interaction with the SMN complex leads to enhance the temporal localization of snRNPs, suggesting a role of PPP4C in maturation of spliceosomal snRNPs. The PPP4C-PPP4R2-PPP4R3A PP4 complex specifically dephosphorylates H2AX phosphorylated on 'Ser-140' (gamma-H2AX) generated during DNA replication and required for DNA double strand break repair. Mediates RPA2 dephosphorylation by recruiting PPP4C to RPA2 in a DNA damage-dependent manner. RPA2 dephosphorylation is required for the efficient RPA2-mediated recruitment of RAD51 to chromatin following double strand breaks, an essential step for DNA repair. This chain is Serine/threonine-protein phosphatase 4 regulatory subunit 2 (Ppp4r2), found in Mus musculus (Mouse).